Reading from the N-terminus, the 146-residue chain is Prostaglandin E synthase 3 (146 aa).

The CS domain occupies 1 to 76 (VFIEFCVEDS…ESGQAWPRLT (76 aa)). Residues 110 to 146 (SEMMNNMGGDDDVDLPEVDGADDDSPDSDDEKMPDLE) form a disordered region. Over residues 118-139 (GDDDVDLPEVDGADDDSPDSDD) the composition is skewed to acidic residues.

This sequence belongs to the p23/wos2 family. Binds to telomerase. Binds to the progesterone receptor.

Its subcellular location is the cytoplasm. It carries out the reaction prostaglandin H2 = prostaglandin E2. The protein operates within lipid metabolism; prostaglandin biosynthesis. Its function is as follows. Molecular chaperone. The protein is Prostaglandin E synthase 3 (PTGES3) of Gallus gallus (Chicken).